Consider the following 339-residue polypeptide: DNA-directed RNA polymerase subunit alpha (339 aa).

The interval 1 to 233 (MVREEITGST…DLFLPFIHTE (233 aa)) is alpha N-terminal domain (alpha-NTD). The segment at 266-339 (GIPLNCIFID…IDLPKNKFSL (74 aa)) is alpha C-terminal domain (alpha-CTD).

The protein belongs to the RNA polymerase alpha chain family. In plastids the minimal PEP RNA polymerase catalytic core is composed of four subunits: alpha, beta, beta', and beta''. When a (nuclear-encoded) sigma factor is associated with the core the holoenzyme is formed, which can initiate transcription.

It is found in the plastid. It localises to the chloroplast. The enzyme catalyses RNA(n) + a ribonucleoside 5'-triphosphate = RNA(n+1) + diphosphate. In terms of biological role, DNA-dependent RNA polymerase catalyzes the transcription of DNA into RNA using the four ribonucleoside triphosphates as substrates. The sequence is that of DNA-directed RNA polymerase subunit alpha from Sorghum bicolor (Sorghum).